The sequence spans 963 residues: MGKPTLLEPGHLYNVPAEHKNDIPIHYIITWIKQRLPEFGGAIPTSLADRVLIIKSRTGSGKSTALPVHVFRILRNENTHSFQKYLGRSVICTQPRVLTAVTLAKDIGASTHYPDMILGQTVGYQTKPLTEKPNRGLIYATAGVLLAQLHTMTDDEIASRYAFMIIDEAHERALGIDLMLMYIKSMLERMLQRGSIGALRIPFVILTSATIDTHKYSTYFGIGKENIILVEGRQFGVETHWPLYNTNNYIKTACETALTIHKENIHDRPTEADILIFMPGMGEIRFLSTLLNNANMDLAKEKLPLMLILPIDSEAIAQENEAYLGLKAEIKNLWVKNPLTAKVEKPLRRVIVSTVVAETGLTIETLKYVIDPGWNRSVETYYPEWAGGLITRPAAQSRIEQRKGRVGRVFPGHFYPLYTKHVFEQIPAQQYPEIITEGPGAIFLNIVVETIKKNKEGVFKAEEIDMLDPPPTDALASAIERAIVGGLLTRGEKGLQLTQLGDIASRFSFLSIEEARMCFSGYFWQAAISDIAIILAVVSVVDKKLTNLLDSKQRNGAMLAEAVLAGIPPFLQHIDNAYTNIHLLLADDLLEGLFIFEGFQHAIVYFINNKVNNLAKHLREWCEKKMLKYSSMVQILARREDILNELAIVGLNPFHQWQNRLASANAETFLKRVCTLKQCIYEAYRLNCFCYDEHRLLYTGRNGIHFSYHDTVIKNPSCIVTPRIMLAPVSKQYMEWRLEPSFVSVLDGFVNMDINFLLPRQEIPNILGGVEDEEEEEPPLPIQVFLHNYVKTHFHFSGKSFKELKMKPSQMIKFPETTLINMIPDIPKNVVQTYLEINVCHQYSFKRLIYCETFYTNMDDVQHENAVELIGLPMAAHHLTINDFNKLYRVLKPDGFLIVYDLHNSQEAYWLHSLQDALGHHTIRRDMDFHTITEWETIFKECGFSPIFSKQPSEHELFIVFKK.

One can recognise a Helicase ATP-binding domain in the interval 43 to 229; it reads IPTSLADRVL…FGIGKENIIL (187 aa). 56–63 lines the ATP pocket; sequence SRTGSGKS. Positions 167-170 match the DEAH box motif; sequence DEAH. The 207-residue stretch at 253–459 folds into the Helicase C-terminal domain; the sequence is ACETALTIHK…TIKKNKEGVF (207 aa). The helical transmembrane segment at 521 to 541 threads the bilayer; that stretch reads GYFWQAAISDIAIILAVVSVV.

The protein belongs to the DEAD box helicase family. DEAH subfamily.

Its subcellular location is the host membrane. The protein resides in the virion. The enzyme catalyses ATP + H2O = ADP + phosphate + H(+). In African swine fever virus (isolate Tick/Malawi/Lil 20-1/1983) (ASFV), this protein is Putative RNA Helicase B962L.